The primary structure comprises 559 residues: Glycerol kinase (559 aa).

Thr-20 is an ADP binding site. 3 residues coordinate ATP: Thr-20, Ser-21, and Ser-22. Thr-20 serves as a coordination point for sn-glycerol 3-phosphate. Position 24 (Arg-24) interacts with ADP. Residues Arg-94, Glu-95, and Tyr-148 each coordinate sn-glycerol 3-phosphate. Positions 94, 95, and 148 each coordinate glycerol. Gly-252 contributes to the beta-D-fructose 1,6-bisphosphate binding site. Asp-265 is a binding site for sn-glycerol 3-phosphate. Glycerol contacts are provided by Asp-265 and Gln-266. Residues Thr-287, Gly-332, Gly-433, and Asn-437 each coordinate ADP. ATP contacts are provided by Thr-287, Gly-332, and Gly-433. Glu-501 contacts Zn(2+). The chain crosses the membrane as a helical span at residues 532 to 552; the sequence is IFCSLPLGFFIVSSMVMLIGA.

It belongs to the FGGY kinase family.

The protein localises to the mitochondrion outer membrane. It is found in the nucleus. The protein resides in the cytoplasm. It localises to the cytosol. The enzyme catalyses glycerol + ATP = sn-glycerol 3-phosphate + ADP + H(+). It participates in polyol metabolism; glycerol degradation via glycerol kinase pathway; sn-glycerol 3-phosphate from glycerol: step 1/1. Functionally, kinase that plays a key role in glycerol metabolism, catalyzing its phosphorylation to produce sn-glycerol 3-phosphate. Sn-glycerol 3-phosphate is a crucial intermediate in various metabolic pathways, such as the synthesis of glycerolipids and triglycerides, glycogenesis, glycolysis and gluconeogenesis. The chain is Glycerol kinase from Rattus norvegicus (Rat).